A 497-amino-acid polypeptide reads, in one-letter code: Probable malate:quinone oxidoreductase (497 aa).

It belongs to the MQO family. Requires FAD as cofactor.

The catalysed reaction is (S)-malate + a quinone = a quinol + oxaloacetate. The protein operates within carbohydrate metabolism; tricarboxylic acid cycle; oxaloacetate from (S)-malate (quinone route): step 1/1. The chain is Probable malate:quinone oxidoreductase from Prochlorococcus marinus subsp. pastoris (strain CCMP1986 / NIES-2087 / MED4).